The chain runs to 94 residues: Neurotoxin LmNaTx45.2 (94 aa).

The signal sequence occupies residues 1-18 (MKLAILSLFLVFQIGVES). Residues 20–86 (KNGFALDHYG…IGDSRKNYCD (67 aa)) enclose the LCN-type CS-alpha/beta domain. 4 disulfides stabilise this stretch: Cys34-Cys85, Cys44-Cys63, Cys48-Cys65, and Cys59-Cys85.

This sequence belongs to the long (4 C-C) scorpion toxin superfamily. Sodium channel inhibitor family. Beta subfamily. In terms of tissue distribution, expressed by the venom gland.

The protein resides in the secreted. Functionally, binds voltage-independently at site-4 of sodium channels (Nav) and shift the voltage of activation toward more negative potentials thereby affecting sodium channel activation and promoting spontaneous and repetitive firing. This chain is Neurotoxin LmNaTx45.2, found in Lychas mucronatus (Chinese swimming scorpion).